Here is a 459-residue protein sequence, read N- to C-terminus: Putrescine aminotransferase (459 aa).

Residues G150–T151 and Q274 contribute to the pyridoxal 5'-phosphate site. N6-(pyridoxal phosphate)lysine is present on K300. T332 contacts pyridoxal 5'-phosphate.

The protein belongs to the class-III pyridoxal-phosphate-dependent aminotransferase family. Putrescine aminotransferase subfamily. Pyridoxal 5'-phosphate is required as a cofactor.

The catalysed reaction is an alkane-alpha,omega-diamine + 2-oxoglutarate = an omega-aminoaldehyde + L-glutamate. It carries out the reaction putrescine + 2-oxoglutarate = 1-pyrroline + L-glutamate + H2O. It catalyses the reaction cadaverine + 2-oxoglutarate = 5-aminopentanal + L-glutamate. Its pathway is amine and polyamine degradation; putrescine degradation; 4-aminobutanal from putrescine (transaminase route): step 1/1. Its function is as follows. Catalyzes the aminotransferase reaction from putrescine to 2-oxoglutarate, leading to glutamate and 4-aminobutanal, which spontaneously cyclizes to form 1-pyrroline. This is the first step in one of two pathways for putrescine degradation, where putrescine is converted into 4-aminobutanoate (gamma-aminobutyrate or GABA) via 4-aminobutanal. Also functions as a cadaverine transaminase in a a L-lysine degradation pathway to succinate that proceeds via cadaverine, glutarate and L-2-hydroxyglutarate. The chain is Putrescine aminotransferase from Escherichia coli O6:H1 (strain CFT073 / ATCC 700928 / UPEC).